The following is a 71-amino-acid chain: Small ribosomal subunit protein bS21 (71 aa).

It belongs to the bacterial ribosomal protein bS21 family.

This chain is Small ribosomal subunit protein bS21, found in Marinobacter nauticus (strain ATCC 700491 / DSM 11845 / VT8) (Marinobacter aquaeolei).